The chain runs to 391 residues: MAAVVENVVKLLGEQYYKDAMEQCHNYNARLCAERSVRLPFLDSQTGVAQSNCYIWMEKRHRGPGLASGQLYSYPARRWRKKRRAHPPEDPRLSFPSIKPDTDQTLKKEGLISQDGSSLEALLRTDPLEKRGAPDPRVDDDSLGEFPVSNSRARKRIIEPDDFLDDLDDEDYEEDTPKRRGKGKSKSKGVSSARKKLDASILEDRDKPYACDICGKRYKNRPGLSYHYAHSHLAEEEGEDKEDSRPPTPVSQRSEEQKSKKGPDGLALPNNYCDFCLGDSKINKKTGQPEELVSCSDCGRSGHPSCLQFTPVMMAAVKTYRWQCIECKCCNLCGTSENDDQLLFCDDCDRGYHMYCLTPSMSEPPEGSWSCHLCLDLLKEKASIYQNQNSS.

The residue at position 2 (A2) is an N-acetylalanine. Glycyl lysine isopeptide (Lys-Gly) (interchain with G-Cter in SUMO2) cross-links involve residues K10, K99, K107, and K108. 2 disordered regions span residues 79 to 147 and 165 to 199; these read WRKK…GEFP and DDLD…KLDA. Composition is skewed to basic and acidic residues over residues 100–110 and 126–140; these read PDTDQTLKKEG and DPLE…RVDD. S142 bears the Phosphoserine mark. The span at 165-174 shows a compositional bias: acidic residues; the sequence is DDLDDEDYEE. At Y172 the chain carries Phosphotyrosine. T176 carries the post-translational modification Phosphothreonine. Residues K178 and K196 each participate in a glycyl lysine isopeptide (Lys-Gly) (interchain with G-Cter in SUMO2) cross-link. Phosphoserine is present on S200. The segment at 209 to 232 adopts a C2H2-type zinc-finger fold; that stretch reads YACDICGKRYKNRPGLSYHYAHSH. A disordered region spans residues 233–266; that stretch reads LAEEEGEDKEDSRPPTPVSQRSEEQKSKKGPDGL. S244 bears the Phosphoserine mark. Over residues 253–263 the composition is skewed to basic and acidic residues; sequence RSEEQKSKKGP. PHD-type zinc fingers lie at residues 270 to 330 and 327 to 377; these read NNYC…CKCC and CKCC…CLDL. S280 is modified (phosphoserine). K281 participates in a covalent cross-link: Glycyl lysine isopeptide (Lys-Gly) (interchain with G-Cter in SUMO2).

It belongs to the requiem/DPF family. Interacts with the nucleosomes, in particular nucleosomes bearing histone H3 crotonylated at 'Lys-14' (H3K14cr) for which DPF2 has high affinity. Also interacts (via PHD-type zinc finger domains) with histone H3 butyrylated at 'Lys-14' (H3K14bu), histone H3 propionylated at 'Lys-14' (H3K14pr), and histone H3 acetylated at 'Lys-14' (H3K14ac). Interacts with histone H3 acetylated at 'Lys-9' (H3K9ac), histone H3 di-methylated at 'Lys-9' (H3K9me2), and histone H3 tri-methylated at 'Lys-9' (H3K9me3). Interacts with histone H4 acetylated at 'Lys-12' (H4K12ac). Interacts with histone H4 acetylated at 'Lys-16' (H4K16ac). Interacts with SWI/SNF complex components. Interacts with SMARCA2, SMARCA4, SMARCB1 and SMARCD1. Interacts with SMARCC1, SMARCC2 and ACTL6A. Interacts with RUNX1. In terms of tissue distribution, in embryo, highest levels are seen in brain, eyes, thymus and olfactory epithelium in nose, whereas several other tissues, including the musculoskeletal system, show moderate expression. In adult, higher expression in testis, medium in thymus and spleen, lower in certain parts of the brain as the hippocampus. No expression in adult heart, lung, liver, duodenum and kidney.

It is found in the nucleus. Its subcellular location is the cytoplasm. Functionally, plays an active role in transcriptional regulation by binding modified histones H3 and H4. Is a negative regulator of myeloid differentiation of hematopoietic progenitor cells. Might also have a role in the development and maturation of lymphoid cells. Involved in the regulation of non-canonical NF-kappa-B pathway. The polypeptide is Zinc finger protein ubi-d4 (Dpf2) (Mus musculus (Mouse)).